The primary structure comprises 152 residues: MQQYSILVLHGPNLNLLGKREPNIYGSVTLDEINLLLSEEAKNLDVTVTCVQSNHEGILIDTIHQAWGLHQGIIINAGAYTHTSVAIRDALSAVKIPTVEVHLSNIYQRETFRHHSYIAPVAIGQISGFGVGSYRLGLLAIVEYLRKLENNH.

The active-site Proton acceptor is Tyr25. Substrate-binding residues include Asn76, His82, and Asp89. His102 acts as the Proton donor in catalysis. Residues 103-104 and Arg113 each bind substrate; that span reads LS.

Belongs to the type-II 3-dehydroquinase family. As to quaternary structure, homododecamer.

The enzyme catalyses 3-dehydroquinate = 3-dehydroshikimate + H2O. The protein operates within metabolic intermediate biosynthesis; chorismate biosynthesis; chorismate from D-erythrose 4-phosphate and phosphoenolpyruvate: step 3/7. Its function is as follows. Catalyzes a trans-dehydration via an enolate intermediate. In Gloeothece citriformis (strain PCC 7424) (Cyanothece sp. (strain PCC 7424)), this protein is 3-dehydroquinate dehydratase.